The chain runs to 354 residues: Guanine nucleotide-binding protein G(i) subunit alpha-1 (354 aa).

Gly-2 carries N-myristoyl glycine lipidation. The S-palmitoyl cysteine moiety is linked to residue Cys-3. The region spanning 32–354 (REVKLLLLGA…KNNLKDCGLF (323 aa)) is the G-alpha domain. The segment at 35 to 48 (KLLLLGAGESGKST) is G1 motif. Residues 43 to 48 (ESGKST), 150 to 151 (DS), and 175 to 178 (LRTR) each bind GTP. A Mg(2+)-binding site is contributed by Ser-47. Residues 173–181 (DVLRTRVKT) form a G2 motif region. Thr-181 contacts Mg(2+). Residues 196–205 (FKMFDVGGQR) are G3 motif. Residues 200-204 (DVGGQ), 269-272 (NKKD), and Ala-326 contribute to the GTP site. The tract at residues 265-272 (ILFLNKKD) is G4 motif. Positions 324–329 (TCATDT) are G5 motif.

Belongs to the G-alpha family. G(i/o/t/z) subfamily. As to quaternary structure, heterotrimeric G proteins are composed of 3 units; alpha, beta and gamma. The alpha chain contains the guanine nucleotide binding site. Part of a spindle orientation complex at least composed of GNAI1, GPSM2 and NUMA1. Identified in complex with the beta subunit GNB1 and the gamma subunit GNG1. Identified in complex with the beta subunit GNB1 and the gamma subunit GNG2. Component of the TAS2R14-GNAI1 complex, consisting of TAS2R14, GNAI1, GNB1 and GNG2; within the complex interacts with TAS2R14; this complex plays a role in the perception of bitterness. GTP binding causes dissociation of the heterotrimer, liberating the individual subunits so that they can interact with downstream effector proteins. Interacts (GDP-bound form) with GPSM1; this inhibits guanine nucleotide exchange and GTP binding. Interacts (GDP-bound form) with GPSM2 (via GoLoco domains); this inhibits guanine nucleotide exchange. Interacts with RGS10; this strongly enhances GTP hydrolysis. Interacts with RGS1 and RGS16; this strongly enhances GTPase activity. Interacts with RGS4. Interacts with RGS12. Interacts (via active GTP- or inactive GDP-bound forms) with RGS14 (via RGS and GoLoco domains). Interacts with RGS3, RGS6, RGS7, RGS8, RGS17, RGS18 and RGS20 (in vitro). Interacts (GDP-bound form) with RIC8A (via C-terminus); promoting GNAI1 folding and association with the plasma membrane. Interacts (inactive GDP-bound form) with NUCB1 (via GBA motif); the interaction leads to activation of GNAI1. Interacts (inactive GDP-bound form) with CCDC88C/DAPLE (via GBA motif); the interaction leads to activation of GNAI1. Interacts (inactive GDP-bound form) with CCDC8A/GIV (via GBA motif). In terms of processing, myristoylation at Gly-2 is required for membrane anchoring before palmitoylation. Palmitoylation at Cys-3 varies with membrane lipid composition. Mainly expressed in the brain, lung and kidney.

The protein resides in the nucleus. The protein localises to the cytoplasm. It localises to the cell membrane. It is found in the cytoskeleton. Its subcellular location is the microtubule organizing center. The protein resides in the centrosome. The protein localises to the cell cortex. It localises to the membrane. It carries out the reaction GTP + H2O = GDP + phosphate + H(+). In terms of biological role, guanine nucleotide-binding proteins (G proteins) function as transducers downstream of G protein-coupled receptors (GPCRs) in numerous signaling cascades. The alpha chain contains the guanine nucleotide binding site and alternates between an active, GTP-bound state and an inactive, GDP-bound state. Signaling by an activated GPCR promotes GDP release and GTP binding. The alpha subunit has a low GTPase activity that converts bound GTP to GDP, thereby terminating the signal. Both GDP release and GTP hydrolysis are modulated by numerous regulatory proteins. Signaling is mediated via effector proteins, such as adenylate cyclase. Inhibits adenylate cyclase activity of ADCY1, ADCY5 and ADCY6, leading to decreased intracellular cAMP levels. The inactive GDP-bound form prevents the association of RGS14 with centrosomes and is required for the translocation of RGS14 from the cytoplasm to the plasma membrane. Required for normal cytokinesis during mitosis. Required for cortical dynein-dynactin complex recruitment during metaphase. The sequence is that of Guanine nucleotide-binding protein G(i) subunit alpha-1 (GNAI1) from Cavia porcellus (Guinea pig).